A 205-amino-acid polypeptide reads, in one-letter code: MAQQLAREQGITLRGSAEIVAEFFSFGINSILYQRGIYPSETFTRVQKYGLTLLTTTDPELIKYLNNVVEQLKEWLYKCSVQKLVVVISNIESGEVLERWQFDIECDKTAKEEGVRREKSQKAIQDEIRSVIRQITATVTFLPLLEVSCSFDLLIYTDKDLVVPEKWEESGPQFITNCEEVRLRSFTTTIHKVNSMVAYKTPVND.

An N-acetylalanine modification is found at alanine 2. The HORMA domain maps to 14-197; that stretch reads RGSAEIVAEF…TTIHKVNSMV (184 aa). A phosphoserine mark is found at serine 130, serine 170, serine 185, and serine 195. The tract at residues 195-205 is required for assuming the closed conformation and for interaction with CDC20; the sequence is SMVAYKTPVND.

The protein belongs to the MAD2 family. In terms of assembly, monomer and homodimer. Heterodimerizes with MAD2L1 in order to form a tetrameric MAD1L1-MAD2L1 core complex. In the closed and open conformation, interacts with MAD1L1. Formation of a heterotetrameric core complex containing two molecules each of MAD1L1 and of MAD2L1 promotes binding of another molecule of MAD2L1 to each MAD2L1, resulting in a heterohexamer. Interacts with MAD2L1BP. Interacts with ADAM17/TACE. Interacts with CDC20. Dimeric MAD2L1 in the closed conformation interacts with CDC20. Monomeric MAD2L1 in the open conformation does not interact with CDC20. CDC20 competes with MAD1L1 for MAD2L1 binding. In the closed conformation, interacts with BUB1B. Interacts with TTK. Interacts with TPR. Binds to UBD (via ubiquitin-like 1 domain) during mitosis. Interacts with isoform 1 and isoform 2 of NEK2. Interacts with HSF1; this interaction occurs in mitosis. In terms of processing, phosphorylated on multiple serine residues. The level of phosphorylation varies during the cell cycle and is highest during mitosis. Phosphorylation abolishes interaction with MAD1L1 and reduces interaction with CDC20. Phosphorylated by NEK2.

It is found in the nucleus. The protein resides in the chromosome. Its subcellular location is the centromere. It localises to the kinetochore. The protein localises to the cytoplasm. It is found in the cytoskeleton. The protein resides in the spindle pole. Component of the spindle-assembly checkpoint that prevents the onset of anaphase until all chromosomes are properly aligned at the metaphase plate. In the closed conformation (C-MAD2) forms a heterotetrameric complex with MAD1L1 at unattached kinetochores during prometaphase, and recruits an open conformation of MAD2L1 (O-MAD2) which then promotes the conversion of O-MAD2 to C-MAD2. Required for the execution of the mitotic checkpoint which monitors the process of kinetochore-spindle attachment and inhibits the activity of the anaphase promoting complex by sequestering CDC20 until all chromosomes are aligned at the metaphase plate. This Mus musculus (Mouse) protein is Mitotic spindle assembly checkpoint protein MAD2A (Mad2l1).